We begin with the raw amino-acid sequence, 302 residues long: Bifunctional protein FolD (302 aa).

NADP(+) contacts are provided by residues 165-167 (GRS), S190, and I231.

This sequence belongs to the tetrahydrofolate dehydrogenase/cyclohydrolase family. As to quaternary structure, homodimer.

The catalysed reaction is (6R)-5,10-methylene-5,6,7,8-tetrahydrofolate + NADP(+) = (6R)-5,10-methenyltetrahydrofolate + NADPH. It catalyses the reaction (6R)-5,10-methenyltetrahydrofolate + H2O = (6R)-10-formyltetrahydrofolate + H(+). It functions in the pathway one-carbon metabolism; tetrahydrofolate interconversion. In terms of biological role, catalyzes the oxidation of 5,10-methylenetetrahydrofolate to 5,10-methenyltetrahydrofolate and then the hydrolysis of 5,10-methenyltetrahydrofolate to 10-formyltetrahydrofolate. This is Bifunctional protein FolD from Prochlorococcus marinus (strain MIT 9313).